The sequence spans 709 residues: Meiotic sister-chromatid recombination protein 6, mitochondrial (709 aa).

Residues 1 to 29 (MLRINQRLLVRSLRDAQYQYLKSTALRFL) constitute a mitochondrion transit peptide.

The protein localises to the mitochondrion. Functionally, may be involved in the control of meiotic sister-chromatid recombination. The protein is Meiotic sister-chromatid recombination protein 6, mitochondrial (MSC6) of Candida glabrata (strain ATCC 2001 / BCRC 20586 / JCM 3761 / NBRC 0622 / NRRL Y-65 / CBS 138) (Yeast).